Here is a 286-residue protein sequence, read N- to C-terminus: tRNA pseudouridine synthase A (286 aa).

Aspartate 60 (nucleophile) is an active-site residue. Substrate is bound at residue tyrosine 132.

It belongs to the tRNA pseudouridine synthase TruA family. Homodimer.

It catalyses the reaction uridine(38/39/40) in tRNA = pseudouridine(38/39/40) in tRNA. Formation of pseudouridine at positions 38, 39 and 40 in the anticodon stem and loop of transfer RNAs. The polypeptide is tRNA pseudouridine synthase A (Mycobacterium leprae (strain TN)).